Consider the following 688-residue polypeptide: Elongation factor G (688 aa).

Residues 8 to 282 enclose the tr-type G domain; it reads EKTRNIGIMA…AIIDYLPSPM (275 aa). Residues 17–24, 81–85, and 135–138 contribute to the GTP site; these read AHIDAGKT, DTPGH, and NKMD.

Belongs to the TRAFAC class translation factor GTPase superfamily. Classic translation factor GTPase family. EF-G/EF-2 subfamily.

It localises to the cytoplasm. Its function is as follows. Catalyzes the GTP-dependent ribosomal translocation step during translation elongation. During this step, the ribosome changes from the pre-translocational (PRE) to the post-translocational (POST) state as the newly formed A-site-bound peptidyl-tRNA and P-site-bound deacylated tRNA move to the P and E sites, respectively. Catalyzes the coordinated movement of the two tRNA molecules, the mRNA and conformational changes in the ribosome. The protein is Elongation factor G (fusA) of Apple proliferation phytoplasma.